Here is a 292-residue protein sequence, read N- to C-terminus: Acetylglutamate kinase (292 aa).

Residues 72–73 (GG), arginine 94, and asparagine 187 each bind substrate.

It belongs to the acetylglutamate kinase family. ArgB subfamily.

The protein localises to the cytoplasm. The enzyme catalyses N-acetyl-L-glutamate + ATP = N-acetyl-L-glutamyl 5-phosphate + ADP. It functions in the pathway amino-acid biosynthesis; L-arginine biosynthesis; N(2)-acetyl-L-ornithine from L-glutamate: step 2/4. Functionally, catalyzes the ATP-dependent phosphorylation of N-acetyl-L-glutamate. The chain is Acetylglutamate kinase from Trichodesmium erythraeum (strain IMS101).